A 458-amino-acid polypeptide reads, in one-letter code: Ammonium transporter Rh type B (458 aa).

Over 1-13 the chain is Cytoplasmic; sequence MAGSPSRAAGRRL. Residues 14–34 traverse the membrane as a helical segment; it reads QLPLLCLFLQGATAVLFAVFV. Residues 35–61 are Extracellular-facing; the sequence is RYNHKTDAALWHRGNYSNADNEFYFRY. Residue asparagine 49 is glycosylated (N-linked (GlcNAc...) asparagine). The helical transmembrane segment at 62–82 threads the bilayer; it reads PSFQDVHAMVFVGFGFLMVFL. Topologically, residues 83 to 86 are cytoplasmic; sequence QRYG. A helical membrane pass occupies residues 87-107; it reads FSSVGFTFLLAAFALQWSTLV. Topologically, residues 108-124 are extracellular; the sequence is QGFLHSFHSGHIHVGVE. The chain crosses the membrane as a helical span at residues 125-145; the sequence is SMINADFCAGAVLISFGAVLG. At 146-149 the chain is on the cytoplasmic side; sequence KTGP. Residues 150 to 170 form a helical membrane-spanning segment; sequence AQLLLMALLEVVLFGINEFVL. Residues 171–178 lie on the Extracellular side of the membrane; it reads LHLLGVRD. Residues 179 to 201 traverse the membrane as a helical segment; that stretch reads AGGSMTIHTFGAYFGLVLSRVLY. At 202-219 the chain is on the cytoplasmic side; the sequence is RPQLEKSKHRQGSVYHSD. A helical membrane pass occupies residues 220 to 240; that stretch reads LFAMIGTIFLWIFWPSFNSAL. Topologically, residues 241–251 are extracellular; it reads TALGAGQHRTA. Residues 252–272 traverse the membrane as a helical segment; the sequence is LNTYYSLAASTLGTFALSALV. At 273–282 the chain is on the cytoplasmic side; the sequence is GEDGRLDMVH. The chain crosses the membrane as a helical span at residues 283 to 303; sequence IQNAALAGGVVVGTSSEMMLT. Proline 304 is a topological domain (extracellular). Residues 305 to 325 traverse the membrane as a helical segment; that stretch reads FGALAAGFLAGTVSTLGYKFF. The Cytoplasmic segment spans residues 326–346; it reads TPILESKFKVQDTCGVHNLHG. The helical transmembrane segment at 347-367 threads the bilayer; that stretch reads MPGVLGALLGVLVAGLATHEA. The Extracellular portion of the chain corresponds to 368–393; sequence YGDGLESVFPLIAEGQRSATSQAMLQ. A helical transmembrane segment spans residues 394–414; sequence LFGLFVTLMFASVGGGLGGLL. Topologically, residues 415–458 are cytoplasmic; sequence LKLPFLDSPPDSQCYEDQVHWQVPGEHEDEAQRPLRVEEADTQA. The interval 416–424 is interaction with ANK3; sequence KLPFLDSPP. Residues 429–432 carry the Basolateral sorting signal motif; it reads YEDQ. A disordered region spans residues 439-458; sequence GEHEDEAQRPLRVEEADTQA. Residues 444 to 458 are compositionally biased toward basic and acidic residues; it reads EAQRPLRVEEADTQA.

Belongs to the ammonium transporter (TC 2.A.49) family. Rh subfamily. As to quaternary structure, interacts (via C-terminus) with ANK2 and ANK3; required for targeting to the basolateral membrane. Post-translationally, N-glycosylated.

Its subcellular location is the cell membrane. The protein localises to the basolateral cell membrane. It catalyses the reaction NH4(+)(in) = NH4(+)(out). It carries out the reaction methylamine(out) = methylamine(in). The enzyme catalyses CO2(out) = CO2(in). Ammonium transporter involved in the maintenance of acid-base homeostasis. Transports ammonium and its related derivative methylammonium across the basolateral plasma membrane of epithelial cells likely contributing to renal transepithelial ammonia transport and ammonia metabolism. May transport either NH4(+) or NH3 ammonia species predominantly mediating an electrogenic NH4(+) transport. May act as a CO2 channel providing for renal acid secretion. The chain is Ammonium transporter Rh type B (RHBG) from Papio hamadryas (Hamadryas baboon).